The chain runs to 198 residues: Superoxide dismutase [Fe] (198 aa).

Residues histidine 27, histidine 74, aspartate 157, and histidine 161 each coordinate Fe cation.

It belongs to the iron/manganese superoxide dismutase family. Homodimer. It depends on Fe cation as a cofactor.

It catalyses the reaction 2 superoxide + 2 H(+) = H2O2 + O2. Destroys superoxide anion radicals which are normally produced within the cells and which are toxic to biological systems. The chain is Superoxide dismutase [Fe] (sodB) from Pseudomonas putida (strain ATCC 47054 / DSM 6125 / CFBP 8728 / NCIMB 11950 / KT2440).